Reading from the N-terminus, the 84-residue chain is Large ribosomal subunit protein bL27 (84 aa).

A disordered region spans residues 1–22 (MAHKKGGGSTKNGRDSNPKYLG).

This sequence belongs to the bacterial ribosomal protein bL27 family.

The polypeptide is Large ribosomal subunit protein bL27 (Prosthecochloris aestuarii (strain DSM 271 / SK 413)).